The following is a 184-amino-acid chain: Rubrerythrin-2 (184 aa).

In terms of domain architecture, Ferritin-like diiron spans 2-146 (SVKNAMTADF…DAQDSAKENK (145 aa)). Fe(3+) is bound by residues Glu19, Glu52, Glu94, Glu97, Glu128, His131, Cys156, Cys159, Cys171, and Cys174. The Rubredoxin-like domain maps to 151 to 184 (GKVYICPVCGFTTLDENIEQCPICGVKKDKFQAF).

Fe(3+) serves as cofactor.

The enzyme catalyses H2O2 + NADH + H(+) = NAD(+) + 2 H2O. Its activity is regulated as follows. Rubredoxin (Rd) increases the NADH consumption rate by serving as an intermediary electron-transfer shuttle between NROR and Rbr2. Functionally, functions as the terminal component of an NADH peroxidase (NADH:H(2)O(2) oxidoreductase) when using NADH:rubredoxin oxidoreductase (NROR) as the electron transport intermediary from NADH to Rbr2. This Clostridium acetobutylicum (strain ATCC 824 / DSM 792 / JCM 1419 / IAM 19013 / LMG 5710 / NBRC 13948 / NRRL B-527 / VKM B-1787 / 2291 / W) protein is Rubrerythrin-2 (rbr2).